The chain runs to 354 residues: MSQLETXYDVMRRQGITRRSFLKYCSLTGRPCLGPTFAPQIAHAMETRPPTPVVWLHGLECTCCSESFIRSGDPLVKDVVLSMISLDYDDTLMPPRHQGTVEETMRKYKGEYILAVEGNPPLNEDGMFCIVGGKPFLDQLKHAAKDAKAVIAWGSCASWGCVQAAKPNPTQAVPIHKVITDKPMIKVPGCPPIAEVMTGVITYMLTFGKLPELDRQGRPKMFYGQRIHDKSYRRPHFDAGQFVEHWDDEGARKGYCLYKVGCKGPTSYNACSTVRWNEGTSFPIQAGHGCIGCSEDGFWDKGSFYERLTTIPQFGIEKNADQIGPRGRRGSGAAIAAHAAVTAIKRLQNKGDQA.

The tat-type signal signal peptide spans 1–44 (MSQLETXYDVMRRQGITRRSFLKYCSLTGRPCLGPTFAPQIAHA). 8 residues coordinate [4Fe-4S] cluster: Cys61, Cys64, Cys156, Cys190, His228, Ser231, Cys256, and Cys262. Cys271, Cys290, and Cys293 together coordinate [3Fe-4S] cluster.

The protein belongs to the [NiFe]/[NiFeSe] hydrogenase small subunit family. Heterodimer of a large and a small subunit. It depends on [4Fe-4S] cluster as a cofactor. The cofactor is [3Fe-4S] cluster. Predicted to be exported by the Tat system. The position of the signal peptide cleavage has not been experimentally proven.

The protein resides in the cell membrane. The catalysed reaction is H2 + A = AH2. Functionally, this enzyme recycles the H(2) produced by nitrogenase to increase the production of ATP and to protect nitrogenase against inhibition or damage by O(2) under carbon- or phosphate-limited conditions. The protein is Uptake hydrogenase small subunit (hupA) of Azotobacter chroococcum mcd 1.